Reading from the N-terminus, the 327-residue chain is Tetraacyldisaccharide 4'-kinase (327 aa).

52 to 59 provides a ligand contact to ATP; that stretch reads TLGGAGKT.

It belongs to the LpxK family.

The catalysed reaction is a lipid A disaccharide + ATP = a lipid IVA + ADP + H(+). It participates in glycolipid biosynthesis; lipid IV(A) biosynthesis; lipid IV(A) from (3R)-3-hydroxytetradecanoyl-[acyl-carrier-protein] and UDP-N-acetyl-alpha-D-glucosamine: step 6/6. In terms of biological role, transfers the gamma-phosphate of ATP to the 4'-position of a tetraacyldisaccharide 1-phosphate intermediate (termed DS-1-P) to form tetraacyldisaccharide 1,4'-bis-phosphate (lipid IVA). This Methylorubrum populi (strain ATCC BAA-705 / NCIMB 13946 / BJ001) (Methylobacterium populi) protein is Tetraacyldisaccharide 4'-kinase.